The primary structure comprises 299 residues: Bifunctional protein FolD (299 aa).

NADP(+) contacts are provided by residues 166 to 168 (GRS), S191, and I232.

This sequence belongs to the tetrahydrofolate dehydrogenase/cyclohydrolase family. As to quaternary structure, homodimer.

It catalyses the reaction (6R)-5,10-methylene-5,6,7,8-tetrahydrofolate + NADP(+) = (6R)-5,10-methenyltetrahydrofolate + NADPH. It carries out the reaction (6R)-5,10-methenyltetrahydrofolate + H2O = (6R)-10-formyltetrahydrofolate + H(+). The protein operates within one-carbon metabolism; tetrahydrofolate interconversion. In terms of biological role, catalyzes the oxidation of 5,10-methylenetetrahydrofolate to 5,10-methenyltetrahydrofolate and then the hydrolysis of 5,10-methenyltetrahydrofolate to 10-formyltetrahydrofolate. This is Bifunctional protein FolD from Anaplasma marginale (strain St. Maries).